A 233-amino-acid chain; its full sequence is Protein DEHYDRATION-INDUCED 19 homolog 2 (233 aa).

The interval 176 to 215 is disordered; that stretch reads DLHSDSSDNNFLLNKFPDDKTAERAEPSLSEKDQKERAQR. The span at 191–214 shows a compositional bias: basic and acidic residues; the sequence is FPDDKTAERAEPSLSEKDQKERAQ.

The protein belongs to the Di19 family.

The chain is Protein DEHYDRATION-INDUCED 19 homolog 2 (DI19-2) from Oryza sativa subsp. japonica (Rice).